The chain runs to 376 residues: Mitogen-activated protein kinase 4 (376 aa).

The 287-residue stretch at 43 to 329 (VPPLRPIGRG…VDEALCHPYL (287 aa)) folds into the Protein kinase domain. ATP contacts are provided by residues 49 to 57 (IGRGAYGIV) and K72. D169 functions as the Proton acceptor in the catalytic mechanism. The residue at position 201 (T201) is a Phosphothreonine. Positions 201 to 203 (TEY) match the TXY motif. A Phosphotyrosine modification is found at Y203.

This sequence belongs to the protein kinase superfamily. CMGC Ser/Thr protein kinase family. MAP kinase subfamily. As to quaternary structure, interacts with MEKK1, MKK1, MKK2 and MKK6. May form a ternary complex composed of MEKK1 and MKK1/MKK2 and MPK4. Interacts with MKS1 and AP2C1. May form a ternary or larger complex with MKS1 and WRKY25 and/or WRKY33. Interacts with MAP65-1. No interactions with RACK1A, RACK1B or RACK1C. Interacts directly with ASR3 and mediates its phosphorylation. Binds to MEKK2. Interacts with PAT1. Binds to HT1. In terms of processing, dually phosphorylated on Thr-201 and Tyr-203, which activates the enzyme. Autophosphorylated on serine and tyrosine residues. Dephosphorylated by DSPTP1. Phosphorylated by MKK6 in vitro. In terms of tissue distribution, ubiquitous. Expressed in the veins and stomatal guard cells of leaf plates, petioles, stem, roots and flowers.

Its subcellular location is the cytoplasm. The protein resides in the nucleus. It is found in the cytoskeleton. The enzyme catalyses L-seryl-[protein] + ATP = O-phospho-L-seryl-[protein] + ADP + H(+). The catalysed reaction is L-threonyl-[protein] + ATP = O-phospho-L-threonyl-[protein] + ADP + H(+). Its activity is regulated as follows. Activated by threonine and tyrosine phosphorylation. Activated by the MAP kinase kinases MKK1 and MKK2. Activated in response to touch, wounding, low temperature, low humidity, salt stress and the bacterial elicitors flagellin and harpin. Activated upon Pseudomonas syringae pv. tomato DC3000 infection. Repressed by the protein phosphatase 2C AP2C1. Repressed by DSPTP1-mediated dephosphorylation. Activated by the MAP kinase kinase MKK6 in vitro. In terms of biological role, the ANPs-MKK6-MPK4 module is involved in the regulation of plant cytokinesis during meiosis and mitosis. Essential to promote the progression of cytokinesis and for cellularization (formation of the cell plate) during male-specific meiosis. Involved in cortical microtubules organization and stabilization by regulating the phosphorylation state of microtubule-associated proteins such as MAP65-1. Involved in root hair development process. Negative regulator of systemic acquired resistance (SAR) and salicylic acid- (SA) mediated defense response. Required for jasmonic acid- (JA) mediated defense gene expression. May regulate activity of transcription factor controlling pathogenesis-related (PR) gene expression. Seems to act independently of the SAR regulatory protein NPR1 (Nonexpresser of PR1). Phosphorylates MKS1 and transcription factors WRKY25 and WRKY33. The MEKK1, MKK1/MKK2 and MPK4 function in a signaling pathway that modulates the expression of genes responding to biotic and abiotic stresses and also plays an important role in pathogen defense by negatively regulating innate immunity. Phosphorylates MEKK2 upon treatment with flg22. Involved in stomatal movement regulation by repressing HT1 and HT1-mediated GHR1 phosphorylation. The protein is Mitogen-activated protein kinase 4 of Arabidopsis thaliana (Mouse-ear cress).